Reading from the N-terminus, the 304-residue chain is Non-specific ribonucleoside hydrolase RihC (304 aa).

His-233 is a catalytic residue.

This sequence belongs to the IUNH family. RihC subfamily.

In terms of biological role, hydrolyzes both purine and pyrimidine ribonucleosides with a broad-substrate specificity. The sequence is that of Non-specific ribonucleoside hydrolase RihC from Escherichia coli O139:H28 (strain E24377A / ETEC).